Here is a 238-residue protein sequence, read N- to C-terminus: 1-(5-phosphoribosyl)-5-[(5-phosphoribosylamino)methylideneamino] imidazole-4-carboxamide isomerase (238 aa).

Catalysis depends on Asp8, which acts as the Proton acceptor. The active-site Proton donor is Asp129.

It belongs to the HisA/HisF family.

The protein resides in the cytoplasm. The enzyme catalyses 1-(5-phospho-beta-D-ribosyl)-5-[(5-phospho-beta-D-ribosylamino)methylideneamino]imidazole-4-carboxamide = 5-[(5-phospho-1-deoxy-D-ribulos-1-ylimino)methylamino]-1-(5-phospho-beta-D-ribosyl)imidazole-4-carboxamide. Its pathway is amino-acid biosynthesis; L-histidine biosynthesis; L-histidine from 5-phospho-alpha-D-ribose 1-diphosphate: step 4/9. The sequence is that of 1-(5-phosphoribosyl)-5-[(5-phosphoribosylamino)methylideneamino] imidazole-4-carboxamide isomerase from Lacticaseibacillus casei (strain BL23) (Lactobacillus casei).